The sequence spans 572 residues: Urease subunit alpha (572 aa).

Positions 136–572 constitute a Urease domain; that stretch reads GGIDTHIHFI…VPLGQRYFLF (437 aa). Ni(2+) contacts are provided by His-141, His-143, and Lys-224. Lys-224 carries the post-translational modification N6-carboxylysine. Substrate is bound at residue His-226. Positions 253 and 279 each coordinate Ni(2+). His-327 functions as the Proton donor in the catalytic mechanism. Asp-367 serves as a coordination point for Ni(2+).

It belongs to the metallo-dependent hydrolases superfamily. Urease alpha subunit family. As to quaternary structure, heterotrimer of UreA (gamma), UreB (beta) and UreC (alpha) subunits. Three heterotrimers associate to form the active enzyme. The cofactor is Ni cation. Post-translationally, carboxylation allows a single lysine to coordinate two nickel ions.

It localises to the cytoplasm. The enzyme catalyses urea + 2 H2O + H(+) = hydrogencarbonate + 2 NH4(+). It participates in nitrogen metabolism; urea degradation; CO(2) and NH(3) from urea (urease route): step 1/1. The sequence is that of Urease subunit alpha from Haemophilus influenzae (strain ATCC 51907 / DSM 11121 / KW20 / Rd).